An 87-amino-acid polypeptide reads, in one-letter code: Large ribosomal subunit protein bL27 (87 aa).

The protein belongs to the bacterial ribosomal protein bL27 family.

In Phocaeicola vulgatus (strain ATCC 8482 / DSM 1447 / JCM 5826 / CCUG 4940 / NBRC 14291 / NCTC 11154) (Bacteroides vulgatus), this protein is Large ribosomal subunit protein bL27.